The primary structure comprises 115 residues: Nucleoid-associated protein Rpic_1036 (115 aa).

Belongs to the YbaB/EbfC family. Homodimer.

It is found in the cytoplasm. The protein resides in the nucleoid. Its function is as follows. Binds to DNA and alters its conformation. May be involved in regulation of gene expression, nucleoid organization and DNA protection. The sequence is that of Nucleoid-associated protein Rpic_1036 from Ralstonia pickettii (strain 12J).